Reading from the N-terminus, the 681-residue chain is Methionine--tRNA ligase (681 aa).

The 'HIGH' region motif lies at 14-24; sequence PYANGSIHLGH. Residues C145, C148, C158, and C161 each coordinate Zn(2+). The 'KMSKS' region motif lies at 331-335; the sequence is KMSKS. An ATP-binding site is contributed by K334. Positions 579-681 constitute a tRNA-binding domain; the sequence is AFAAVDLRIA…AGAKPGQRVH (103 aa).

It belongs to the class-I aminoacyl-tRNA synthetase family. MetG type 1 subfamily. Homodimer. Zn(2+) serves as cofactor.

The protein resides in the cytoplasm. The catalysed reaction is tRNA(Met) + L-methionine + ATP = L-methionyl-tRNA(Met) + AMP + diphosphate. Functionally, is required not only for elongation of protein synthesis but also for the initiation of all mRNA translation through initiator tRNA(fMet) aminoacylation. The polypeptide is Methionine--tRNA ligase (Azotobacter vinelandii (strain DJ / ATCC BAA-1303)).